The chain runs to 397 residues: ATP-dependent RNA helicase eIF4A (397 aa).

The Q motif signature appears at tyrosine 23–glutamine 51. Residues isoleucine 54 to isoleucine 224 enclose the Helicase ATP-binding domain. Alanine 67–threonine 74 contributes to the ATP binding site. The DEAD box signature appears at aspartate 172–aspartate 175. Residues glycine 235–phenylalanine 396 form the Helicase C-terminal domain.

The protein belongs to the DEAD box helicase family. eIF4A subfamily. In terms of assembly, component of the eIF4F complex, which composition varies with external and internal environmental conditions. It is composed of at least eIF4A, eIF4E and eIF4G.

The protein localises to the cytoplasm. It carries out the reaction ATP + H2O = ADP + phosphate + H(+). Functionally, ATP-dependent RNA helicase which is a subunit of the eIF4F complex involved in cap recognition and is required for mRNA binding to ribosome. In the current model of translation initiation, eIF4A unwinds RNA secondary structures in the 5'-UTR of mRNAs which is necessary to allow efficient binding of the small ribosomal subunit, and subsequent scanning for the initiator codon. This is ATP-dependent RNA helicase eIF4A (TIF1) from Scheffersomyces stipitis (strain ATCC 58785 / CBS 6054 / NBRC 10063 / NRRL Y-11545) (Yeast).